The following is a 319-amino-acid chain: Beta-ketoacyl-[acyl-carrier-protein] synthase III (319 aa).

Catalysis depends on residues cysteine 114 and histidine 246. The tract at residues 247 to 251 is ACP-binding; sequence QANIR. Asparagine 276 is a catalytic residue.

Belongs to the thiolase-like superfamily. FabH family. As to quaternary structure, homodimer.

The protein localises to the cytoplasm. It catalyses the reaction malonyl-[ACP] + acetyl-CoA + H(+) = 3-oxobutanoyl-[ACP] + CO2 + CoA. The protein operates within lipid metabolism; fatty acid biosynthesis. Functionally, catalyzes the condensation reaction of fatty acid synthesis by the addition to an acyl acceptor of two carbons from malonyl-ACP. Catalyzes the first condensation reaction which initiates fatty acid synthesis and may therefore play a role in governing the total rate of fatty acid production. Possesses both acetoacetyl-ACP synthase and acetyl transacylase activities. Its substrate specificity determines the biosynthesis of branched-chain and/or straight-chain of fatty acids. The chain is Beta-ketoacyl-[acyl-carrier-protein] synthase III from Thiobacillus denitrificans (strain ATCC 25259 / T1).